The following is a 268-amino-acid chain: Cell division cycle-associated protein 3 (268 aa).

Disordered stretches follow at residues 1–232 and 247–268; these read MGSA…SELK and GRAW…LVES. 2 positions are modified to phosphoserine: serine 29 and serine 31. Threonine 37 bears the Phosphothreonine mark. Phosphoserine is present on residues serine 44, serine 64, and serine 68. Positions 56 to 66 are enriched in basic and acidic residues; that stretch reads EGLKHAQDSDP. Threonine 76 carries the post-translational modification Phosphothreonine. Phosphoserine occurs at positions 87 and 94. Positions 91-120 are F-box-like; it reads KQLSEVFETEDSKSNLPPEPVLPPEAPLSS. Residues 107 to 116 are compositionally biased toward pro residues; sequence PPEPVLPPEA. The segment covering 117 to 126 has biased composition (low complexity); sequence PLSSELDLPL. Composition is skewed to polar residues over residues 128-149, 158-169, and 178-194; these read TQLS…SKQV, PTETPVASQSSD, and PRSS…NSSK. Serine 199 is modified (phosphoserine). Phosphothreonine is present on threonine 202. The span at 205–215 shows a compositional bias: polar residues; sequence QDDNSPGTLTL. The residue at position 209 (serine 209) is a Phosphoserine. Threonine 212 carries the post-translational modification Phosphothreonine. The KEN box signature appears at 258 to 260; that stretch reads KEN.

Interacts with SKP1. Part of a SCF (SKP1-cullin-F-box) protein ligase complex. Post-translationally, ubiquitinated and degraded by the APC/C-Cdh1 complex.

It is found in the cytoplasm. Its subcellular location is the cytosol. Its pathway is protein modification; protein ubiquitination. Its function is as follows. F-box-like protein which is required for entry into mitosis. Acts by participating in E3 ligase complexes that mediate the ubiquitination and degradation of WEE1 kinase at G2/M phase. The polypeptide is Cell division cycle-associated protein 3 (CDCA3) (Homo sapiens (Human)).